Here is a 141-residue protein sequence, read N- to C-terminus: Putative 8-oxo-dGTP diphosphatase 2 (141 aa).

Residues 2 to 131 form the Nudix hydrolase domain; the sequence is LNQIVVAGAI…WIADLARTLN (130 aa). Positions 37, 52, 55, and 56 each coordinate Mg(2+). The Nudix box motif lies at 37–58; sequence GKVAAGETERAALARELAEELG.

It belongs to the Nudix hydrolase family. Mg(2+) is required as a cofactor. Requires Mn(2+) as cofactor.

The catalysed reaction is 8-oxo-dGTP + H2O = 8-oxo-dGMP + diphosphate + H(+). Its function is as follows. May be involved in the GO system responsible for removing an oxidatively damaged form of guanine (7,8-dihydro-8-oxoguanine, 8-oxo-dGTP) from DNA and the nucleotide pool. 8-oxo-dGTP is inserted opposite dA and dC residues of template DNA with almost equal efficiency thus leading to A.T to G.C transversions. MutT specifically degrades 8-oxo-dGTP to the monophosphate. The protein is Putative 8-oxo-dGTP diphosphatase 2 (mutT2) of Mycobacterium tuberculosis (strain CDC 1551 / Oshkosh).